Consider the following 319-residue polypeptide: 4-hydroxy-3-methylbut-2-enyl diphosphate reductase (319 aa).

C17 provides a ligand contact to [4Fe-4S] cluster. (2E)-4-hydroxy-3-methylbut-2-enyl diphosphate is bound by residues H46 and H79. The dimethylallyl diphosphate site is built by H46 and H79. 2 residues coordinate isopentenyl diphosphate: H46 and H79. C101 is a binding site for [4Fe-4S] cluster. H129 contributes to the (2E)-4-hydroxy-3-methylbut-2-enyl diphosphate binding site. A dimethylallyl diphosphate-binding site is contributed by H129. H129 contributes to the isopentenyl diphosphate binding site. E131 functions as the Proton donor in the catalytic mechanism. Position 170 (T170) interacts with (2E)-4-hydroxy-3-methylbut-2-enyl diphosphate. C200 serves as a coordination point for [4Fe-4S] cluster. Residues S228, S229, N230, and S273 each contribute to the (2E)-4-hydroxy-3-methylbut-2-enyl diphosphate site. Residues S228, S229, N230, and S273 each contribute to the dimethylallyl diphosphate site. Isopentenyl diphosphate is bound by residues S228, S229, N230, and S273.

This sequence belongs to the IspH family. [4Fe-4S] cluster serves as cofactor.

The catalysed reaction is isopentenyl diphosphate + 2 oxidized [2Fe-2S]-[ferredoxin] + H2O = (2E)-4-hydroxy-3-methylbut-2-enyl diphosphate + 2 reduced [2Fe-2S]-[ferredoxin] + 2 H(+). It catalyses the reaction dimethylallyl diphosphate + 2 oxidized [2Fe-2S]-[ferredoxin] + H2O = (2E)-4-hydroxy-3-methylbut-2-enyl diphosphate + 2 reduced [2Fe-2S]-[ferredoxin] + 2 H(+). The protein operates within isoprenoid biosynthesis; dimethylallyl diphosphate biosynthesis; dimethylallyl diphosphate from (2E)-4-hydroxy-3-methylbutenyl diphosphate: step 1/1. It functions in the pathway isoprenoid biosynthesis; isopentenyl diphosphate biosynthesis via DXP pathway; isopentenyl diphosphate from 1-deoxy-D-xylulose 5-phosphate: step 6/6. Functionally, catalyzes the conversion of 1-hydroxy-2-methyl-2-(E)-butenyl 4-diphosphate (HMBPP) into a mixture of isopentenyl diphosphate (IPP) and dimethylallyl diphosphate (DMAPP). Acts in the terminal step of the DOXP/MEP pathway for isoprenoid precursor biosynthesis. The protein is 4-hydroxy-3-methylbut-2-enyl diphosphate reductase of Cereibacter sphaeroides (strain ATCC 17029 / ATH 2.4.9) (Rhodobacter sphaeroides).